Here is a 234-residue protein sequence, read N- to C-terminus: Accessory gland protein Acp29AB (234 aa).

The first 21 residues, 1-21 (MYASNLLYLLALWNLWDLSGG), serve as a signal peptide directing secretion. Asn61 and Asn164 each carry an N-linked (GlcNAc...) asparagine glycan. Residues 137–234 (VTCRKMNGHL…SFVCQADQWA (98 aa)) form the C-type lectin domain. 2 cysteine pairs are disulfide-bonded: Cys139/Cys228 and Cys207/Cys220.

Main cells of the accessory gland and in seminal fluid.

It is found in the secreted. Its function is as follows. Responsible for physiological and behavioral changes in mated female flies. The chain is Accessory gland protein Acp29AB (Acp29AB) from Drosophila melanogaster (Fruit fly).